The chain runs to 90 residues: Probable Fe(2+)-trafficking protein (90 aa).

The protein belongs to the Fe(2+)-trafficking protein family.

Its function is as follows. Could be a mediator in iron transactions between iron acquisition and iron-requiring processes, such as synthesis and/or repair of Fe-S clusters in biosynthetic enzymes. This is Probable Fe(2+)-trafficking protein from Koribacter versatilis (strain Ellin345).